The primary structure comprises 187 residues: Cytokinin riboside 5'-monophosphate phosphoribohydrolase (187 aa).

Lys-74 participates in a covalent cross-link: Isoglutamyl lysine isopeptide (Lys-Gln) (interchain with Q-Cter in protein Pup). Substrate-binding positions include Glu-80, 98–99 (RK), 115–121 (GVGTLDE), and Thr-127.

Belongs to the LOG family. In terms of assembly, homodimer. Pupylated at Lys-74 by the prokaryotic ubiquitin-like protein Pup, which leads to its degradation by the proteasome. The proteasomal control of cytokinin synthesis is essential to protect M.tuberculosis against host-produced NO.

The enzyme catalyses N(6)-(dimethylallyl)adenosine 5'-phosphate + H2O = N(6)-dimethylallyladenine + D-ribose 5-phosphate. It carries out the reaction 9-ribosyl-trans-zeatin 5'-phosphate + H2O = trans-zeatin + D-ribose 5-phosphate. In terms of biological role, catalyzes the hydrolytic removal of ribose 5'-monophosphate from nitrogen N6-modified adenosines, the final step of bioactive cytokinin synthesis. Is involved in the synthesis of isopentenyladenine (iP) and 2-methylthio-iP (2MeS-iP), the most abundant cytokinins detected in M.tuberculosis lysates and supernatants. Is also able to convert trans-zeatin-riboside monophosphate (tZRMP) to trans-zeatin (tZ) in vitro; however, it may not be involved in the biosynthesis of this minor cytokinin in vivo. Accumulation of Rv1205 sensitizes M.tuberculosis to nitric oxide since cytokinin breakdown products synergize with NO to kill M.tuberculosis. Shows a slow AMP hydrolase activity, but is not able to hydrolyze ATP. Displays no lysine decarboxylase (LDC) activity (L-lysine conversion to cadaverine). This chain is Cytokinin riboside 5'-monophosphate phosphoribohydrolase, found in Mycobacterium tuberculosis (strain ATCC 25618 / H37Rv).